The following is a 482-amino-acid chain: tRNA sulfurtransferase (482 aa).

The THUMP domain occupies 61 to 165 (LAIRDALTRI…DDRLLLIKGR (105 aa)). ATP-binding positions include 183 to 184 (LI), K265, G287, and Q296. A disulfide bridge links C344 with C456. The region spanning 404 to 482 (FGPNDVILDI…GFQNVKVYRP (79 aa)) is the Rhodanese domain. The active-site Cysteine persulfide intermediate is C456.

It belongs to the ThiI family.

It localises to the cytoplasm. It carries out the reaction [ThiI sulfur-carrier protein]-S-sulfanyl-L-cysteine + a uridine in tRNA + 2 reduced [2Fe-2S]-[ferredoxin] + ATP + H(+) = [ThiI sulfur-carrier protein]-L-cysteine + a 4-thiouridine in tRNA + 2 oxidized [2Fe-2S]-[ferredoxin] + AMP + diphosphate. The enzyme catalyses [ThiS sulfur-carrier protein]-C-terminal Gly-Gly-AMP + S-sulfanyl-L-cysteinyl-[cysteine desulfurase] + AH2 = [ThiS sulfur-carrier protein]-C-terminal-Gly-aminoethanethioate + L-cysteinyl-[cysteine desulfurase] + A + AMP + 2 H(+). Its pathway is cofactor biosynthesis; thiamine diphosphate biosynthesis. In terms of biological role, catalyzes the ATP-dependent transfer of a sulfur to tRNA to produce 4-thiouridine in position 8 of tRNAs, which functions as a near-UV photosensor. Also catalyzes the transfer of sulfur to the sulfur carrier protein ThiS, forming ThiS-thiocarboxylate. This is a step in the synthesis of thiazole, in the thiamine biosynthesis pathway. The sulfur is donated as persulfide by IscS. The polypeptide is tRNA sulfurtransferase (Citrobacter koseri (strain ATCC BAA-895 / CDC 4225-83 / SGSC4696)).